The sequence spans 390 residues: Phosphopentomutase (390 aa).

6 residues coordinate Mn(2+): aspartate 12, aspartate 284, histidine 289, aspartate 325, histidine 326, and histidine 337.

It belongs to the phosphopentomutase family. Requires Mn(2+) as cofactor.

It localises to the cytoplasm. It carries out the reaction 2-deoxy-alpha-D-ribose 1-phosphate = 2-deoxy-D-ribose 5-phosphate. It catalyses the reaction alpha-D-ribose 1-phosphate = D-ribose 5-phosphate. Its pathway is carbohydrate degradation; 2-deoxy-D-ribose 1-phosphate degradation; D-glyceraldehyde 3-phosphate and acetaldehyde from 2-deoxy-alpha-D-ribose 1-phosphate: step 1/2. In terms of biological role, isomerase that catalyzes the conversion of deoxy-ribose 1-phosphate (dRib-1-P) and ribose 1-phosphate (Rib-1-P) to deoxy-ribose 5-phosphate (dRib-5-P) and ribose 5-phosphate (Rib-5-P), respectively. The chain is Phosphopentomutase from Macrococcus caseolyticus (strain JCSC5402) (Macrococcoides caseolyticum).